The chain runs to 299 residues: Virginiamycin B lyase (299 aa).

Residue His-229 participates in substrate binding. Residue Glu-269 coordinates Mg(2+). The active-site Proton acceptor is the His-271. Glu-286 serves as a coordination point for Mg(2+).

It belongs to the Vgb family. As to quaternary structure, monomer. Mg(2+) is required as a cofactor.

Inactivates the type B streptogramin antibiotics by linearizing the lactone ring at the ester linkage, generating a free phenylglycine carboxylate and converting the threonyl moiety into 2-amino-butenoic acid. This is Virginiamycin B lyase from Bordetella parapertussis (strain 12822 / ATCC BAA-587 / NCTC 13253).